The primary structure comprises 85 residues: Large ribosomal subunit protein bL27 (85 aa).

The disordered stretch occupies residues 1-22 (MAHKKAGGSSRNGRDSHSKRLG).

This sequence belongs to the bacterial ribosomal protein bL27 family.

The chain is Large ribosomal subunit protein bL27 from Nitrosomonas europaea (strain ATCC 19718 / CIP 103999 / KCTC 2705 / NBRC 14298).